A 431-amino-acid polypeptide reads, in one-letter code: Na(+)/H(+) antiporter NhaA (431 aa).

11 helical membrane passes run 33–53 (VGGA…NSPW), 74–94 (LSIS…VVGV), 112–132 (ALPI…FVGV), 144–164 (GWAI…AVIA), 173–193 (IFLL…IAVF), 197–217 (QLSF…GLAV), 225–245 (FLLL…GVHA), 279–299 (FAVP…LSGF), 311–331 (VIAG…YVLA), 347–367 (VLGL…IGEL), and 379–399 (AKIA…VVLL).

It belongs to the NhaA Na(+)/H(+) (TC 2.A.33) antiporter family.

It is found in the cell membrane. It catalyses the reaction Na(+)(in) + 2 H(+)(out) = Na(+)(out) + 2 H(+)(in). Its function is as follows. Na(+)/H(+) antiporter that extrudes sodium in exchange for external protons. The chain is Na(+)/H(+) antiporter NhaA from Mycolicibacterium smegmatis (strain ATCC 700084 / mc(2)155) (Mycobacterium smegmatis).